The primary structure comprises 198 residues: Molybdopterin synthase catalytic subunit (198 aa).

Residues 1–27 (MASQPPQEPTPTATSTPSTSALASLPP) show a composition bias toward low complexity. Residues 1–40 (MASQPPQEPTPTATSTPSTSALASLPPHLDPTTYPRTLTS) are disordered. Residues 143 to 144 (HR), lysine 159, and 166 to 168 (KRE) contribute to the substrate site. The segment at 176–198 (EWRENRERDAEGKVVAEKQEERE) is disordered.

It belongs to the MoaE family. MOCS2B subfamily. As to quaternary structure, heterotetramer; composed of 2 small (MOCS2A) and 2 large (MOCS2B) subunits.

It localises to the cytoplasm. The enzyme catalyses 2 [molybdopterin-synthase sulfur-carrier protein]-C-terminal-Gly-aminoethanethioate + cyclic pyranopterin phosphate + H2O = molybdopterin + 2 [molybdopterin-synthase sulfur-carrier protein]-C-terminal Gly-Gly + 2 H(+). The protein operates within cofactor biosynthesis; molybdopterin biosynthesis. In terms of biological role, catalytic subunit of the molybdopterin synthase complex, a complex that catalyzes the conversion of precursor Z into molybdopterin. Acts by mediating the incorporation of 2 sulfur atoms from thiocarboxylated MOCS2A into precursor Z to generate a dithiolene group. This is Molybdopterin synthase catalytic subunit from Aspergillus clavatus (strain ATCC 1007 / CBS 513.65 / DSM 816 / NCTC 3887 / NRRL 1 / QM 1276 / 107).